The chain runs to 718 residues: Zinc finger protein 39 (718 aa).

A KRAB domain is found at 59–130 (VSFEDVSVDF…EDVPKQSRAD (72 aa)). The C2H2-type 1 zinc finger occupies 298-320 (FECSICKKTFCTKCELMKHKKIH). A C2H2-type 2; degenerate zinc finger spans residues 353–375 (HRCKQCEKCFHQKNQQNVHERVP). 11 consecutive C2H2-type zinc fingers follow at residues 409–431 (YGCNLCGKAFYRKSHLGRHQKIH), 437–459 (YGCEECKKTFYHKSSLTIHQRTH), 465–487 (YECKKCRKTFYCKSDLNVHHRTH), 493–515 (YECDECRKTFYSKSHLVIHQKVH), 521–543 (YECEECQKAFSRKSNLTVHQKTH), 549–571 (YECNVCGKTFHRQSHLNMHQGTH), 577–599 (YQCEECGKAFYQKSSLRRHQRNH), 605–627 (YACEECRKTFLHKSSLTVHQRSH), 633–655 (YSCEECRKTFYSKSHLTVHQRTH), 661–683 (YECKLCKKAFHQKSYLNRHQVTH), and 689–711 (FECQECRKTFYHKSSLTVHQRIH).

In terms of tissue distribution, predominantly in the spermatocytes and spermatids of testes.

The protein localises to the nucleus. Its function is as follows. A putative DNA-binding regulatory protein associated with meiosis in spermatogenesis. In Mus musculus (Mouse), this protein is Zinc finger protein 39 (Zfp39).